The following is a 214-amino-acid chain: uncharacterized protein (214 aa).

2 consecutive CBS domains span residues 7–65 (MDKN…KKPI) and 69–129 (MRPV…EIPV).

This is an uncharacterized protein from Methanocaldococcus jannaschii (strain ATCC 43067 / DSM 2661 / JAL-1 / JCM 10045 / NBRC 100440) (Methanococcus jannaschii).